The primary structure comprises 213 residues: Maleamate amidohydrolase (213 aa).

The active-site Nucleophile is Cys-154.

The protein belongs to the isochorismatase family.

It catalyses the reaction maleamate + H2O = maleate + NH4(+). It functions in the pathway cofactor degradation; nicotinate degradation. Maleamate amidase that transforms maleamate into maleate and ammonia in the aerobic nicotinate degradation pathway. This Pseudomonas putida (strain ATCC 47054 / DSM 6125 / CFBP 8728 / NCIMB 11950 / KT2440) protein is Maleamate amidohydrolase (nicF).